The sequence spans 330 residues: ADP-L-glycero-D-manno-heptose-6-epimerase (330 aa).

Residues 11-12 (FI), 32-33 (DN), lysine 39, lysine 54, 75-79 (EGACS), and asparagine 92 each bind NADP(+). The Proton acceptor role is filled by tyrosine 139. Residue lysine 143 participates in NADP(+) binding. Asparagine 168 provides a ligand contact to substrate. 2 residues coordinate NADP(+): valine 169 and lysine 177. Lysine 177 functions as the Proton acceptor in the catalytic mechanism. Substrate contacts are provided by residues arginine 179, histidine 186, 200 to 203 (FGEY), arginine 213, and tyrosine 292.

Belongs to the NAD(P)-dependent epimerase/dehydratase family. HldD subfamily. As to quaternary structure, homopentamer. NADP(+) is required as a cofactor.

The catalysed reaction is ADP-D-glycero-beta-D-manno-heptose = ADP-L-glycero-beta-D-manno-heptose. The protein operates within nucleotide-sugar biosynthesis; ADP-L-glycero-beta-D-manno-heptose biosynthesis; ADP-L-glycero-beta-D-manno-heptose from D-glycero-beta-D-manno-heptose 7-phosphate: step 4/4. Its function is as follows. Catalyzes the interconversion between ADP-D-glycero-beta-D-manno-heptose and ADP-L-glycero-beta-D-manno-heptose via an epimerization at carbon 6 of the heptose. In Burkholderia cenocepacia (strain ATCC BAA-245 / DSM 16553 / LMG 16656 / NCTC 13227 / J2315 / CF5610) (Burkholderia cepacia (strain J2315)), this protein is ADP-L-glycero-D-manno-heptose-6-epimerase.